The sequence spans 208 residues: Uracil phosphoribosyltransferase (208 aa).

Residues Arg78, Arg103, and 130 to 138 (DPMLATGGS) contribute to the 5-phospho-alpha-D-ribose 1-diphosphate site. Uracil is bound by residues Ile193 and 198-200 (GDA). Residue Asp199 coordinates 5-phospho-alpha-D-ribose 1-diphosphate.

The protein belongs to the UPRTase family. Mg(2+) is required as a cofactor.

It catalyses the reaction UMP + diphosphate = 5-phospho-alpha-D-ribose 1-diphosphate + uracil. Its pathway is pyrimidine metabolism; UMP biosynthesis via salvage pathway; UMP from uracil: step 1/1. Allosterically activated by GTP. Its function is as follows. Catalyzes the conversion of uracil and 5-phospho-alpha-D-ribose 1-diphosphate (PRPP) to UMP and diphosphate. The sequence is that of Uracil phosphoribosyltransferase from Neisseria meningitidis serogroup A / serotype 4A (strain DSM 15465 / Z2491).